A 216-amino-acid polypeptide reads, in one-letter code: MGWIRGRRSRHSWEMSEFHNYNLDLAKNDFSTRWQKQRCPVIKSKCRENTSPLFFCCFIAVAMGIRFIVMVTIWSAVFLNSLFNQEVQIPLTGSYCGPCPKNWICYKNNCYQFFNESKNWYESQASCMSQNASLLKVYSKEDQDLLKLVKSYHWMGLIHIPTNGSWQWEDGSILSPNLLTIIEMQKGDCALYASSFKGYIENCSTPNTYICMQRTV.

Residues 1 to 51 are Cytoplasmic-facing; sequence MGWIRGRRSRHSWEMSEFHNYNLDLAKNDFSTRWQKQRCPVIKSKCRENTS. A helical; Signal-anchor for type II membrane protein membrane pass occupies residues 52–72; the sequence is PLFFCCFIAVAMGIRFIVMVT. At 73-216 the chain is on the extracellular side; that stretch reads IWSAVFLNSL…NTYICMQRTV (144 aa). 2 disulfide bridges follow: cysteine 96–cysteine 105 and cysteine 99–cysteine 110. The C-type lectin domain occupies 98–213; it reads PCPKNWICYK…STPNTYICMQ (116 aa). Residues asparagine 115, asparagine 131, asparagine 163, and asparagine 202 are each glycosylated (N-linked (GlcNAc...) asparagine). Cystine bridges form between cysteine 127–cysteine 211 and cysteine 189–cysteine 203.

As to quaternary structure, homodimer; disulfide-linked. Heterohexamer composed of two subunits of KLRK1 and four subunits of HCST/DAP10. Interacts (via transmembrane domain) with HCST/DAP10 (via transmembrane domain); the interaction is required for KLRK1 NK cell surface and induces NK cell-mediated cytotoxicity. Can form disulfide-bonded heterodimer with CD94. Interacts with CEACAM1; recruits PTPN6 that dephosphorylates VAV1.

Its subcellular location is the cell membrane. Functions as an activating and costimulatory receptor involved in immunosurveillance upon binding to various cellular stress-inducible ligands displayed at the surface of autologous tumor cells and virus-infected cells. Provides both stimulatory and costimulatory innate immune responses on activated killer (NK) cells, leading to cytotoxic activity. Acts as a costimulatory receptor for T-cell receptor (TCR) in CD8(+) T-cell-mediated adaptive immune responses by amplifying T-cell activation. Stimulates perforin-mediated elimination of ligand-expressing tumor cells. Signaling involves calcium influx, culminating in the expression of TNF-alpha. Participates in NK cell-mediated bone marrow graft rejection. May play a regulatory role in differentiation and survival of NK cells. Binds to ligands belonging to various subfamilies of MHC class I-related glycoproteins. This chain is NKG2-D type II integral membrane protein (KLRK1), found in Pongo pygmaeus (Bornean orangutan).